A 236-amino-acid polypeptide reads, in one-letter code: Diaminopimelate epimerase (236 aa).

The substrate site is built by asparagine 8 and asparagine 55. Cysteine 64 functions as the Proton donor in the catalytic mechanism. Residues 65–66, asparagine 159, and 176–177 each bind substrate; these read GN and ER. The active-site Proton acceptor is the cysteine 186. Residue 187 to 188 participates in substrate binding; it reads GT.

The protein belongs to the diaminopimelate epimerase family. Probably forms homotrimers.

Its subcellular location is the cytoplasm. The catalysed reaction is (2S,6S)-2,6-diaminopimelate = meso-2,6-diaminopimelate. It functions in the pathway amino-acid biosynthesis; L-lysine biosynthesis via DAP pathway; DL-2,6-diaminopimelate from LL-2,6-diaminopimelate: step 1/1. Catalyzes the stereoinversion of LL-2,6-diaminopimelate (L,L-DAP) to meso-diaminopimelate (meso-DAP), a precursor of L-lysine and an essential component of the bacterial peptidoglycan. Also catalyzes the racemization of certain amino acids, including Lys, with low efficiency. The chain is Diaminopimelate epimerase from Thermotoga maritima (strain ATCC 43589 / DSM 3109 / JCM 10099 / NBRC 100826 / MSB8).